Consider the following 335-residue polypeptide: tRNA pseudouridine synthase D (335 aa).

Asp77 acts as the Nucleophile in catalysis. Residues 152 to 308 enclose the TRUD domain; sequence GFPNYFTEQR…AQNLNWQFEP (157 aa).

It belongs to the pseudouridine synthase TruD family.

The catalysed reaction is uridine(13) in tRNA = pseudouridine(13) in tRNA. Its function is as follows. Responsible for synthesis of pseudouridine from uracil-13 in transfer RNAs. In Actinobacillus succinogenes (strain ATCC 55618 / DSM 22257 / CCUG 43843 / 130Z), this protein is tRNA pseudouridine synthase D.